Here is a 691-residue protein sequence, read N- to C-terminus: Ribonuclease J (691 aa).

The segment at 1-89 (MTDNNHYENN…TRNYAKEELD (89 aa)) is disordered. Positions 1-132 (MTDNNHYENN…KIQVEHLNPH (132 aa)) are loss of region decreases protein stability, still able to interact with RhpA, but has decreased RNase activity even on ssRNA. A compositionally biased stretch (low complexity) spans 10 to 19 (NESNENSSEN). A compositionally biased stretch (basic and acidic residues) spans 41–57 (RENAQKNGESSHHEAPS). Residues 58–82 (HHKKEHRPNKKPNNHHKQKHAKTRN) show a composition bias toward basic residues. N6-acetyllysine is present on residues Lys-134 and Lys-140. Zn(2+) contacts are provided by His-208, His-210, Asp-212, His-213, His-277, and Asp-299. Lys-323, Lys-337, and Lys-397 each carry N6-acetyllysine. 500 to 504 (HVSGH) contacts substrate. Lys-511 is subject to N6-acetyllysine. Residue His-526 coordinates Zn(2+). Lys-547, Lys-634, and Lys-649 each carry N6-acetyllysine.

It belongs to the metallo-beta-lactamase superfamily. RNA-metabolizing metallo-beta-lactamase-like family. Bacterial RNase J subfamily. Homodimer. Homotetramer; dimer of homodimers. Interacts with RNA helicase RphA, might be a member of a minimal RNA degradosome complex. It depends on Zn(2+) as a cofactor. Acetylated on nine lysine residues. Some of the residues are acetylated by multiple different mechanisms. RimL is partially responsible for the acetylation of Lys-323, Lys-397 and Lys-649. HPB8_1270 homolog is partially responsible for the acetylation of Lys-323, Lys-397, Lys-511 and Lys-649. Acetyl-phosphate-mediated non-enzymatic acetylation pathway takes part in the acetylation of Lys-134, Lys-323, Lys-397, Lys-511 and Lys-649. Acetylation of the remaining residues Lys-140, Lys-337, Lys-547 and Lys-634 occurs by a yet undetermined mechanism. Acetylation on a number of these residues is important for growth regulation and proper cell morphology.

The protein resides in the cytoplasm. Its activity is regulated as follows. Catalytic activity is regulated by the balance between homodimers and homotetramers, with homotetramers being the active forms of this enzyme. Acetylation allosterically regulates the homooligomerization state and hence the catalytic activity. An RNase that has 5'-3' exoribonuclease and endoribonuclease activity. Degrades 5'-monophosphorylated ssRNA and dsRNA, considerably more active on ssRNA. Association with RhpA significantly increases the dsRNase activity. Degrades RNA substrate with hairpin structures at both ends with low activity, but presence of RhpA significantly increases the activity on this substrate. Stimulates ATPase activity of RNA helicase RhpA. Involved in stabilization of mRNA but apparently not rRNA. This chain is Ribonuclease J, found in Helicobacter pylori (strain B128).